Consider the following 445-residue polypeptide: Dolichyl-diphosphooligosaccharide--protein glycosyltransferase 48 kDa subunit (445 aa).

A signal peptide spans 1-20 (MRWLPGLLLIASIGFHQSLA). Over 21-405 (DRVLVLGETA…YERFIRSAYP (385 aa)) the chain is Lumenal. The helical transmembrane segment at 406–426 (YYASSFSMMAGLVLFSIVYLY) threads the bilayer. The Cytoplasmic portion of the chain corresponds to 427–445 (HKDTPVKGAKVLDSEKKKN).

The protein belongs to the DDOST 48 kDa subunit family. In terms of assembly, component of the oligosaccharyltransferase (OST) complex.

It localises to the endoplasmic reticulum membrane. It functions in the pathway protein modification; protein glycosylation. Functionally, subunit of the oligosaccharyl transferase (OST) complex that catalyzes the initial transfer of a defined glycan (Glc(3)Man(9)GlcNAc(2) in eukaryotes) from the lipid carrier dolichol-pyrophosphate to an asparagine residue within an Asn-X-Ser/Thr consensus motif in nascent polypeptide chains, the first step in protein N-glycosylation. N-glycosylation occurs cotranslationally and the complex associates with the Sec61 complex at the channel-forming translocon complex that mediates protein translocation across the endoplasmic reticulum (ER). All subunits are required for a maximal enzyme activity. Required for the assembly of both SST3A- and SS3B-containing OST complexes. Required for normal lifespan. This chain is Dolichyl-diphosphooligosaccharide--protein glycosyltransferase 48 kDa subunit, found in Caenorhabditis elegans.